A 396-amino-acid chain; its full sequence is Methionine import ATP-binding protein MetN 2 (396 aa).

Positions 41–280 constitute an ABC transporter domain; the sequence is VSFELVGKVF…PRHGATRALL (240 aa). An ATP-binding site is contributed by 77–84; that stretch reads GRSGAGKS.

This sequence belongs to the ABC transporter superfamily. Methionine importer (TC 3.A.1.24) family. In terms of assembly, the complex is composed of two ATP-binding proteins (MetN), two transmembrane proteins (MetI) and a solute-binding protein (MetQ).

The protein resides in the cell inner membrane. It carries out the reaction L-methionine(out) + ATP + H2O = L-methionine(in) + ADP + phosphate + H(+). The catalysed reaction is D-methionine(out) + ATP + H2O = D-methionine(in) + ADP + phosphate + H(+). Part of the ABC transporter complex MetNIQ involved in methionine import. Responsible for energy coupling to the transport system. In Burkholderia pseudomallei (strain K96243), this protein is Methionine import ATP-binding protein MetN 2.